Here is a 267-residue protein sequence, read N- to C-terminus: GTP cyclohydrolase FolE2 (267 aa).

Belongs to the GTP cyclohydrolase IV family.

The catalysed reaction is GTP + H2O = 7,8-dihydroneopterin 3'-triphosphate + formate + H(+). It functions in the pathway cofactor biosynthesis; 7,8-dihydroneopterin triphosphate biosynthesis; 7,8-dihydroneopterin triphosphate from GTP: step 1/1. Functionally, converts GTP to 7,8-dihydroneopterin triphosphate. This is GTP cyclohydrolase FolE2 from Nitrosomonas eutropha (strain DSM 101675 / C91 / Nm57).